The chain runs to 151 residues: Nucleoside diphosphate kinase (151 aa).

ATP-binding residues include Lys-11, Phe-59, Arg-87, Thr-93, Arg-104, and Asn-114. The Pros-phosphohistidine intermediate role is filled by His-117.

This sequence belongs to the NDK family. Requires Mg(2+) as cofactor.

It catalyses the reaction a 2'-deoxyribonucleoside 5'-diphosphate + ATP = a 2'-deoxyribonucleoside 5'-triphosphate + ADP. The enzyme catalyses a ribonucleoside 5'-diphosphate + ATP = a ribonucleoside 5'-triphosphate + ADP. Major role in the synthesis of nucleoside triphosphates other than ATP. The ATP gamma phosphate is transferred to the NDP beta phosphate via a ping-pong mechanism, using a phosphorylated active-site intermediate. The polypeptide is Nucleoside diphosphate kinase (NDK1) (Eremothecium gossypii (strain ATCC 10895 / CBS 109.51 / FGSC 9923 / NRRL Y-1056) (Yeast)).